We begin with the raw amino-acid sequence, 259 residues long: Phosphatidylserine decarboxylase proenzyme (259 aa).

Active-site charge relay system; for autoendoproteolytic cleavage activity residues include Asp-86, His-142, and Ser-226. Residue Ser-226 is the Schiff-base intermediate with substrate; via pyruvic acid; for decarboxylase activity of the active site. Residue Ser-226 is modified to Pyruvic acid (Ser); by autocatalysis.

The protein belongs to the phosphatidylserine decarboxylase family. PSD-B subfamily. Prokaryotic type I sub-subfamily. Heterodimer of a large membrane-associated beta subunit and a small pyruvoyl-containing alpha subunit. Requires pyruvate as cofactor. Post-translationally, is synthesized initially as an inactive proenzyme. Formation of the active enzyme involves a self-maturation process in which the active site pyruvoyl group is generated from an internal serine residue via an autocatalytic post-translational modification. Two non-identical subunits are generated from the proenzyme in this reaction, and the pyruvate is formed at the N-terminus of the alpha chain, which is derived from the carboxyl end of the proenzyme. The autoendoproteolytic cleavage occurs by a canonical serine protease mechanism, in which the side chain hydroxyl group of the serine supplies its oxygen atom to form the C-terminus of the beta chain, while the remainder of the serine residue undergoes an oxidative deamination to produce ammonia and the pyruvoyl prosthetic group on the alpha chain. During this reaction, the Ser that is part of the protease active site of the proenzyme becomes the pyruvoyl prosthetic group, which constitutes an essential element of the active site of the mature decarboxylase.

The protein localises to the cell membrane. It carries out the reaction a 1,2-diacyl-sn-glycero-3-phospho-L-serine + H(+) = a 1,2-diacyl-sn-glycero-3-phosphoethanolamine + CO2. It functions in the pathway phospholipid metabolism; phosphatidylethanolamine biosynthesis; phosphatidylethanolamine from CDP-diacylglycerol: step 2/2. In terms of biological role, catalyzes the formation of phosphatidylethanolamine (PtdEtn) from phosphatidylserine (PtdSer). The chain is Phosphatidylserine decarboxylase proenzyme from Halalkalibacterium halodurans (strain ATCC BAA-125 / DSM 18197 / FERM 7344 / JCM 9153 / C-125) (Bacillus halodurans).